Reading from the N-terminus, the 251-residue chain is 5-oxoprolinase subunit A (251 aa).

Belongs to the LamB/PxpA family. In terms of assembly, forms a complex composed of PxpA, PxpB and PxpC.

The catalysed reaction is 5-oxo-L-proline + ATP + 2 H2O = L-glutamate + ADP + phosphate + H(+). In terms of biological role, catalyzes the cleavage of 5-oxoproline to form L-glutamate coupled to the hydrolysis of ATP to ADP and inorganic phosphate. The protein is 5-oxoprolinase subunit A of Vibrio campbellii (strain ATCC BAA-1116).